A 59-amino-acid polypeptide reads, in one-letter code: uncharacterized protein (59 aa).

This is an uncharacterized protein from Torque teno tupaia virus (isolate Tbc-TTV14).